Consider the following 606-residue polypeptide: MEPPRGPPANGAEPSRAVGTVKVYLPNKQRTVVTVRDGMSVYDSLDKALKVRGLNQDCCVVYRLIKGRKTVTAWDTAIAPLDGEELIVEVLEDVPLTMHNFVRKTFFSLAFCDFCLKFLFHGFRCQTCGYKFHQHCSSKVPTVCVDMSTNRQQFYHSVQDLSGGSRQHEAPSNRPLNELLTPQGPSPRTQHCDPEHFPFPAPANAPLQRIRSTSTPNVHMVSTTAPMDSNLIQLTGQSFSTDAAGSRGGSDGTPRGSPSPASVSSGRKSPHSKSPAEQRERKSLADDKKKVKNLGYRDSGYYWEVPPSEVQLLKRIGTGSFGTVFRGRWHGDVAVKVLKVSQPTAEQAQAFKNEMQVLRKTRHVNILLFMGFMTRPGFAIITQWCEGSSLYHHLHVADTRFDMVQLIDVARQTAQGMDYLHAKNIIHRDLKSNNIFLHEGLTVKIGDFGLATVKTRWSGAQPLEQPSGSVLWMAAEVIRMQDPNPYSFQSDVYAYGVVLYELMTGSLPYSHIGCRDQIIFMVGRGYLSPDLSKISSNCPKAMRRLLSDCLKFQREERPLFPQILATIELLQRSLPKIERSASEPSLHRTQADELPACLLSAARLVP.

In terms of domain architecture, RBD spans 19 to 91 (GTVKVYLPNK…DGEELIVEVL (73 aa)). The Phorbol-ester/DAG-type zinc finger occupies 98-144 (MHNFVRKTFFSLAFCDFCLKFLFHGFRCQTCGYKFHQHCSSKVPTVC). Zn(2+) is bound by residues histidine 99, cysteine 112, cysteine 115, cysteine 125, cysteine 128, histidine 133, cysteine 136, and cysteine 144. Phosphoserine occurs at positions 157 and 162. The segment at 160–207 (DLSGGSRQHEAPSNRPLNELLTPQGPSPRTQHCDPEHFPFPAPANAPL) is disordered. Position 181 is a phosphothreonine (threonine 181). Phosphoserine occurs at positions 186 and 214. Residues 240–290 (STDAAGSRGGSDGTPRGSPSPASVSSGRKSPHSKSPAEQRERKSLADDKKK) form a disordered region. Phosphothreonine is present on threonine 253. 2 positions are modified to phosphoserine: serine 257 and serine 269. Basic and acidic residues predominate over residues 274–289 (SPAEQRERKSLADDKK). The region spanning 310-570 (VQLLKRIGTG…PQILATIELL (261 aa)) is the Protein kinase domain. Residues 316–324 (IGTGSFGTV) and lysine 336 contribute to the ATP site. A Phosphothreonine modification is found at threonine 318. Aspartate 429 serves as the catalytic Proton acceptor.

Belongs to the protein kinase superfamily. TKL Ser/Thr protein kinase family. RAF subfamily. As to quaternary structure, interacts with TH1L/NELFD. Zn(2+) serves as cofactor. In terms of processing, dephosphorylation of Ser-214 by the SHOC2-MRAS-PP1c (SMP) complex consisting of SHOC2, GTP-bound M-Ras/MRAS and the catalytic subunit of protein phosphatase 1 (PPP1CA, PPP1CB or PPP1CC); this relieves inactivation and stimulates kinase activity. Predominantly in urogenital tissues.

It carries out the reaction L-seryl-[protein] + ATP = O-phospho-L-seryl-[protein] + ADP + H(+). It catalyses the reaction L-threonyl-[protein] + ATP = O-phospho-L-threonyl-[protein] + ADP + H(+). In terms of biological role, involved in the transduction of mitogenic signals from the cell membrane to the nucleus. May also regulate the TOR signaling cascade. Phosphorylates PFKFB2. Functionally, serves as a positive regulator of myogenic differentiation by inducing cell cycle arrest, the expression of myogenin and other muscle-specific proteins, and myotube formation. This is Serine/threonine-protein kinase A-Raf (ARAF) from Homo sapiens (Human).